The chain runs to 355 residues: UDP-3-O-acylglucosamine N-acyltransferase (355 aa).

His-248 serves as the catalytic Proton acceptor.

The protein belongs to the transferase hexapeptide repeat family. LpxD subfamily. As to quaternary structure, homotrimer.

The catalysed reaction is a UDP-3-O-[(3R)-3-hydroxyacyl]-alpha-D-glucosamine + a (3R)-hydroxyacyl-[ACP] = a UDP-2-N,3-O-bis[(3R)-3-hydroxyacyl]-alpha-D-glucosamine + holo-[ACP] + H(+). It participates in bacterial outer membrane biogenesis; LPS lipid A biosynthesis. Functionally, catalyzes the N-acylation of UDP-3-O-acylglucosamine using 3-hydroxyacyl-ACP as the acyl donor. Is involved in the biosynthesis of lipid A, a phosphorylated glycolipid that anchors the lipopolysaccharide to the outer membrane of the cell. This Synechococcus elongatus (strain ATCC 33912 / PCC 7942 / FACHB-805) (Anacystis nidulans R2) protein is UDP-3-O-acylglucosamine N-acyltransferase.